A 355-amino-acid chain; its full sequence is NADH-quinone oxidoreductase subunit H (355 aa).

Helical transmembrane passes span 25-45 (LVRILVVAVVILLCVAYLILW), 91-111 (WLYLVAPVMTVVPAFAVWAVI), 126-146 (LLYAMAISSIGVYAVILAGWA), 170-190 (MGFALVLVLMTAGSLNLSEIV), 205-225 (FLSWNWLPLLPAFVVYFVSGI), 253-273 (MAFALFFLAEYINMIVISALA), 290-310 (FIPGIFWLVLKVFALLSVFIW), and 330-350 (VFLPVTVIWVVVVGFWMMSPL).

This sequence belongs to the complex I subunit 1 family. In terms of assembly, NDH-1 is composed of 14 different subunits. Subunits NuoA, H, J, K, L, M, N constitute the membrane sector of the complex.

The protein localises to the cell inner membrane. The enzyme catalyses a quinone + NADH + 5 H(+)(in) = a quinol + NAD(+) + 4 H(+)(out). Its function is as follows. NDH-1 shuttles electrons from NADH, via FMN and iron-sulfur (Fe-S) centers, to quinones in the respiratory chain. The immediate electron acceptor for the enzyme in this species is believed to be ubiquinone. Couples the redox reaction to proton translocation (for every two electrons transferred, four hydrogen ions are translocated across the cytoplasmic membrane), and thus conserves the redox energy in a proton gradient. This subunit may bind ubiquinone. The polypeptide is NADH-quinone oxidoreductase subunit H (Burkholderia vietnamiensis (strain G4 / LMG 22486) (Burkholderia cepacia (strain R1808))).